A 208-amino-acid chain; its full sequence is Uracil phosphoribosyltransferase (208 aa).

Residues Arg-78, Arg-103, and 130–138 (DPMLATGGS) each bind 5-phospho-alpha-D-ribose 1-diphosphate. Uracil contacts are provided by residues Ile-193 and 198–200 (GDA). Asp-199 contacts 5-phospho-alpha-D-ribose 1-diphosphate.

It belongs to the UPRTase family. It depends on Mg(2+) as a cofactor.

The catalysed reaction is UMP + diphosphate = 5-phospho-alpha-D-ribose 1-diphosphate + uracil. The protein operates within pyrimidine metabolism; UMP biosynthesis via salvage pathway; UMP from uracil: step 1/1. With respect to regulation, allosterically activated by GTP. Functionally, catalyzes the conversion of uracil and 5-phospho-alpha-D-ribose 1-diphosphate (PRPP) to UMP and diphosphate. The protein is Uracil phosphoribosyltransferase of Blochmanniella pennsylvanica (strain BPEN).